The following is a 63-amino-acid chain: Cecropin-A1 (63 aa).

The signal sequence occupies residues 1 to 23 (MKFYNIFVFVALILAITIGQSEA). The residue at position 62 (R62) is an Arginine amide.

This sequence belongs to the cecropin family.

The protein resides in the secreted. Its function is as follows. Cecropins have lytic and antibacterial activity against several Gram-positive and Gram-negative bacteria. The chain is Cecropin-A1 (CecA1) from Drosophila mauritiana (Fruit fly).